The following is an 82-amino-acid chain: Small ribosomal subunit protein bS18A (82 aa).

Belongs to the bacterial ribosomal protein bS18 family. In terms of assembly, part of the 30S ribosomal subunit. Forms a tight heterodimer with protein bS6.

In terms of biological role, binds as a heterodimer with protein bS6 to the central domain of the 16S rRNA, where it helps stabilize the platform of the 30S subunit. This Streptomyces griseus subsp. griseus (strain JCM 4626 / CBS 651.72 / NBRC 13350 / KCC S-0626 / ISP 5235) protein is Small ribosomal subunit protein bS18A.